Consider the following 684-residue polypeptide: DNA gyrase subunit B, novobiocin-sensitive (684 aa).

The segment at 1 to 22 (MADSGNPNENTPSVATGENGEV) is disordered. The segment at 154-302 (VKTDGYRWTQ…RMLSVEIAMQ (149 aa)) is novobiocin-binding. The Toprim domain maps to 463 to 577 (CEIFIVEGDS…AGHVYLSRPP (115 aa)). 3 residues coordinate Mg(2+): glutamate 469, aspartate 542, and aspartate 544.

The protein belongs to the type II topoisomerase GyrB family. Heterotetramer, composed of two GyrA and two GyrB chains. In the heterotetramer, GyrA contains the active site tyrosine that forms a transient covalent intermediate with DNA, while GyrB binds cofactors and catalyzes ATP hydrolysis. Mg(2+) serves as cofactor. The cofactor is Mn(2+). Ca(2+) is required as a cofactor.

It is found in the cytoplasm. The catalysed reaction is ATP-dependent breakage, passage and rejoining of double-stranded DNA.. In terms of biological role, a type II topoisomerase that negatively supercoils closed circular double-stranded (ds) DNA in an ATP-dependent manner to modulate DNA topology and maintain chromosomes in an underwound state. Negative supercoiling favors strand separation, and DNA replication, transcription, recombination and repair, all of which involve strand separation. Also able to catalyze the interconversion of other topological isomers of dsDNA rings, including catenanes and knotted rings. Type II topoisomerases break and join 2 DNA strands simultaneously in an ATP-dependent manner. This is DNA gyrase subunit B, novobiocin-sensitive from Streptomyces niveus (Streptomyces spheroides).